The sequence spans 63 residues: Large ribosomal subunit protein bL35 (63 aa).

Residues 1–15 (MPKIKTHRGAAKRFK) show a composition bias toward basic residues. The disordered stretch occupies residues 1-26 (MPKIKTHRGAAKRFKQTAGGKWKGSH).

Belongs to the bacterial ribosomal protein bL35 family.

The protein is Large ribosomal subunit protein bL35 of Pelotomaculum thermopropionicum (strain DSM 13744 / JCM 10971 / SI).